Here is a 127-residue protein sequence, read N- to C-terminus: Holo-[acyl-carrier-protein] synthase (127 aa).

Positions 8 and 56 each coordinate Mg(2+).

This sequence belongs to the P-Pant transferase superfamily. AcpS family. Requires Mg(2+) as cofactor.

Its subcellular location is the cytoplasm. The catalysed reaction is apo-[ACP] + CoA = holo-[ACP] + adenosine 3',5'-bisphosphate + H(+). In terms of biological role, transfers the 4'-phosphopantetheine moiety from coenzyme A to a Ser of acyl-carrier-protein. This is Holo-[acyl-carrier-protein] synthase from Deinococcus deserti (strain DSM 17065 / CIP 109153 / LMG 22923 / VCD115).